A 139-amino-acid polypeptide reads, in one-letter code: uncharacterized protein (139 aa).

Residues 3–110 (IFCNIVEGRD…VPTWSQDPDI (108 aa)) form the HIT domain. A Histidine triad motif motif is present at residues 95 to 99 (HSHFH).

This is an uncharacterized protein from Saccharolobus solfataricus (strain ATCC 35092 / DSM 1617 / JCM 11322 / P2) (Sulfolobus solfataricus).